The following is a 152-amino-acid chain: Xanthine-guanine phosphoribosyltransferase (152 aa).

Residues 37 to 38, R69, and 88 to 96 contribute to the 5-phospho-alpha-D-ribose 1-diphosphate site; these read RG and DDLVDTGGT. Residue R69 coordinates GMP. A Mg(2+)-binding site is contributed by D89. The guanine site is built by D92 and I135. Residues D92 and I135 each contribute to the xanthine site. GMP is bound by residues 92 to 96 and 134 to 135; these read DTGGT and WI.

The protein belongs to the purine/pyrimidine phosphoribosyltransferase family. XGPT subfamily. In terms of assembly, homotetramer. It depends on Mg(2+) as a cofactor.

Its subcellular location is the cell inner membrane. The enzyme catalyses GMP + diphosphate = guanine + 5-phospho-alpha-D-ribose 1-diphosphate. It catalyses the reaction XMP + diphosphate = xanthine + 5-phospho-alpha-D-ribose 1-diphosphate. It carries out the reaction IMP + diphosphate = hypoxanthine + 5-phospho-alpha-D-ribose 1-diphosphate. Its pathway is purine metabolism; GMP biosynthesis via salvage pathway; GMP from guanine: step 1/1. It functions in the pathway purine metabolism; XMP biosynthesis via salvage pathway; XMP from xanthine: step 1/1. Its function is as follows. Purine salvage pathway enzyme that catalyzes the transfer of the ribosyl-5-phosphate group from 5-phospho-alpha-D-ribose 1-diphosphate (PRPP) to the N9 position of the 6-oxopurines guanine and xanthine to form the corresponding ribonucleotides GMP (guanosine 5'-monophosphate) and XMP (xanthosine 5'-monophosphate), with the release of PPi. To a lesser extent, also acts on hypoxanthine. This chain is Xanthine-guanine phosphoribosyltransferase, found in Citrobacter koseri (strain ATCC BAA-895 / CDC 4225-83 / SGSC4696).